A 511-amino-acid chain; its full sequence is Mediator of RNA polymerase II transcription subunit 17 (511 aa).

Belongs to the Mediator complex subunit 17 family. Component of the Mediator complex.

The protein localises to the nucleus. Functionally, component of the Mediator complex, a coactivator involved in the regulated transcription of nearly all RNA polymerase II-dependent genes. Mediator functions as a bridge to convey information from gene-specific regulatory proteins to the basal RNA polymerase II transcription machinery. Mediator is recruited to promoters by direct interactions with regulatory proteins and serves as a scaffold for the assembly of a functional preinitiation complex with RNA polymerase II and the general transcription factors. This Yarrowia lipolytica (strain CLIB 122 / E 150) (Yeast) protein is Mediator of RNA polymerase II transcription subunit 17 (SRB4).